A 304-amino-acid chain; its full sequence is D-tagatose-1-phosphate kinase (304 aa).

The Proton acceptor role is filled by Asp-250.

The protein belongs to the carbohydrate kinase PfkB family. It depends on Mg(2+) as a cofactor.

It catalyses the reaction alpha-D-tagatopyranose 1-phosphate + ATP = D-tagatofuranose 1,6-bisphosphate + ADP + H(+). It functions in the pathway carbohydrate degradation. Kinase involved in a D-tagatose catabolic pathway. Catalyzes the phosphorylation of D-tagatose-1-phosphate (Tag-1P) to D-tagatose-1,6-bisphosphate. This Klebsiella oxytoca protein is D-tagatose-1-phosphate kinase.